Reading from the N-terminus, the 76-residue chain is Small ribosomal subunit protein bS18 (76 aa).

The protein belongs to the bacterial ribosomal protein bS18 family. In terms of assembly, part of the 30S ribosomal subunit. Forms a tight heterodimer with protein bS6.

In terms of biological role, binds as a heterodimer with protein bS6 to the central domain of the 16S rRNA, where it helps stabilize the platform of the 30S subunit. This is Small ribosomal subunit protein bS18 from Aeromonas hydrophila subsp. hydrophila (strain ATCC 7966 / DSM 30187 / BCRC 13018 / CCUG 14551 / JCM 1027 / KCTC 2358 / NCIMB 9240 / NCTC 8049).